Reading from the N-terminus, the 310-residue chain is tRNA uridine(34) hydroxylase (310 aa).

One can recognise a Rhodanese domain in the interval 124 to 218; it reads SDPEVLLIDT…YFEEVPQEES (95 aa). The Cysteine persulfide intermediate role is filled by C178.

It belongs to the TrhO family.

The enzyme catalyses uridine(34) in tRNA + AH2 + O2 = 5-hydroxyuridine(34) in tRNA + A + H2O. Catalyzes oxygen-dependent 5-hydroxyuridine (ho5U) modification at position 34 in tRNAs. The chain is tRNA uridine(34) hydroxylase from Pseudomonas putida (strain ATCC 700007 / DSM 6899 / JCM 31910 / BCRC 17059 / LMG 24140 / F1).